Consider the following 149-residue polypeptide: Transcriptional repressor NrdR (149 aa).

A zinc finger lies at Cys-3 to Cys-34. The 91-residue stretch at Pro-49 to Gln-139 folds into the ATP-cone domain.

Belongs to the NrdR family. Zn(2+) serves as cofactor.

In terms of biological role, negatively regulates transcription of bacterial ribonucleotide reductase nrd genes and operons by binding to NrdR-boxes. This is Transcriptional repressor NrdR from Haemophilus influenzae (strain PittEE).